The sequence spans 361 residues: Ribosomal RNA large subunit methyltransferase M (361 aa).

S-adenosyl-L-methionine-binding positions include Ser-187, 220–223 (CPGG), Asp-239, Asp-259, and Asp-276. Catalysis depends on Lys-305, which acts as the Proton acceptor.

The protein belongs to the class I-like SAM-binding methyltransferase superfamily. RNA methyltransferase RlmE family. RlmM subfamily. In terms of assembly, monomer.

It is found in the cytoplasm. The catalysed reaction is cytidine(2498) in 23S rRNA + S-adenosyl-L-methionine = 2'-O-methylcytidine(2498) in 23S rRNA + S-adenosyl-L-homocysteine + H(+). Functionally, catalyzes the 2'-O-methylation at nucleotide C2498 in 23S rRNA. The chain is Ribosomal RNA large subunit methyltransferase M from Shewanella sp. (strain MR-7).